The chain runs to 31 residues: Chymotrypsin (31 aa).

Residues 1–31 (IVGGVEAVPGVWPYQAALFIIDMYFCGGSLI) form the Peptidase S1 domain.

The protein belongs to the peptidase S1 family.

Its subcellular location is the secreted. The protein localises to the extracellular space. It carries out the reaction Preferential cleavage: Tyr-|-Xaa, Trp-|-Xaa, Phe-|-Xaa, Leu-|-Xaa.. The sequence is that of Chymotrypsin from Penaeus monodon (Giant tiger prawn).